A 282-amino-acid polypeptide reads, in one-letter code: RNA-4 uncharacterized 31.9 kDa protein (282 aa).

This chain is RNA-4 uncharacterized 31.9 kDa protein, found in Beta macrocarpa (Beet).